A 253-amino-acid chain; its full sequence is Phosphoglycerate mutase 2 (253 aa).

T3 carries the post-translational modification Phosphothreonine. Residues 10 to 17 (RHGESLWN), 23 to 24 (CG), R62, 89 to 92 (ERHY), K100, and 116 to 117 (RR) each bind substrate. The active-site Tele-phosphohistidine intermediate is the H11. S14 is modified (phosphoserine). E89 acts as the Proton donor/acceptor in catalysis. S118 carries the phosphoserine modification. Phosphothreonine is present on T121. Phosphotyrosine is present on residues Y132 and Y133. Phosphoserine is present on S135. T152 bears the Phosphothreonine mark. 187-188 (GN) is a substrate binding site.

This sequence belongs to the phosphoglycerate mutase family. BPG-dependent PGAM subfamily. In terms of assembly, homodimer. Interacts with ENO1. As to expression, expressed in the testes (at protein level).

It carries out the reaction (2R)-2-phosphoglycerate = (2R)-3-phosphoglycerate. The enzyme catalyses (2R)-3-phospho-glyceroyl phosphate = (2R)-2,3-bisphosphoglycerate + H(+). Functionally, interconversion of 3- and 2-phosphoglycerate with 2,3-bisphosphoglycerate as the primer of the reaction. Can also catalyze the reaction of EC 5.4.2.4 (synthase), but with a reduced activity. The polypeptide is Phosphoglycerate mutase 2 (Pgam2) (Mus musculus (Mouse)).